The chain runs to 328 residues: tRNA uridine(34) hydroxylase (328 aa).

A Rhodanese domain is found at 130-224 (LDKDTVVLDT…YGKDPEVQGE (95 aa)). C184 functions as the Cysteine persulfide intermediate in the catalytic mechanism.

It belongs to the TrhO family.

The catalysed reaction is uridine(34) in tRNA + AH2 + O2 = 5-hydroxyuridine(34) in tRNA + A + H2O. Functionally, catalyzes oxygen-dependent 5-hydroxyuridine (ho5U) modification at position 34 in tRNAs. This Streptococcus pneumoniae serotype 19F (strain G54) protein is tRNA uridine(34) hydroxylase.